The sequence spans 678 residues: DNA ligase (678 aa).

NAD(+) is bound by residues 47–51 (DSDYD), 96–97 (SL), and glutamate 122. The active-site N6-AMP-lysine intermediate is the lysine 124. Arginine 145, glutamate 182, lysine 300, and lysine 324 together coordinate NAD(+). Positions 418, 421, 436, and 442 each coordinate Zn(2+). One can recognise a BRCT domain in the interval 602 to 678 (AYNESFTGKT…ILEDNLKDLL (77 aa)).

Belongs to the NAD-dependent DNA ligase family. LigA subfamily. Mg(2+) is required as a cofactor. Requires Mn(2+) as cofactor.

The enzyme catalyses NAD(+) + (deoxyribonucleotide)n-3'-hydroxyl + 5'-phospho-(deoxyribonucleotide)m = (deoxyribonucleotide)n+m + AMP + beta-nicotinamide D-nucleotide.. Its function is as follows. DNA ligase that catalyzes the formation of phosphodiester linkages between 5'-phosphoryl and 3'-hydroxyl groups in double-stranded DNA using NAD as a coenzyme and as the energy source for the reaction. It is essential for DNA replication and repair of damaged DNA. In Francisella tularensis subsp. novicida (strain U112), this protein is DNA ligase.